The primary structure comprises 244 residues: Inactive chemokine-binding protein (244 aa).

The segment at 1 to 79 is disordered; the sequence is MHVPASLQQS…STSVEDVDPP (79 aa). Polar residues predominate over residues 37–53; it reads QDQTPTNDKICQSVTEI. Residues 54-77 are compositionally biased toward acidic residues; sequence TESESDPDPEVESEDDSTSVEDVD.

The protein belongs to the orthopoxvirus OPG001 family.

It is found in the host cytoplasm. In terms of biological role, the protein is truncated in this vaccinal strain and presumably inactive, because the lack of signal peptide prevents the protein of being secreted. In the other strains inhibits host immune defense by binding to host chemokines. Binds host CC chemokines (beta chemokines) such as RANTES with high affinity, but not CXC or C chemokines (alpha and gamma chemokines). The chain is Inactive chemokine-binding protein (OPG001) from Vaccinia virus (strain Copenhagen) (VACV).